The sequence spans 309 residues: Protein FdhE homolog (309 aa).

The protein belongs to the FdhE family.

The protein resides in the cytoplasm. Necessary for formate dehydrogenase activity. The sequence is that of Protein FdhE homolog from Yersinia enterocolitica serotype O:8 / biotype 1B (strain NCTC 13174 / 8081).